The chain runs to 297 residues: Homoserine kinase (297 aa).

84–94 (PPARGLGSSAT) provides a ligand contact to ATP.

The protein belongs to the GHMP kinase family. Homoserine kinase subfamily.

It is found in the cytoplasm. It catalyses the reaction L-homoserine + ATP = O-phospho-L-homoserine + ADP + H(+). It functions in the pathway amino-acid biosynthesis; L-threonine biosynthesis; L-threonine from L-aspartate: step 4/5. Catalyzes the ATP-dependent phosphorylation of L-homoserine to L-homoserine phosphate. This chain is Homoserine kinase (thrB), found in Aquifex aeolicus (strain VF5).